The sequence spans 87 residues: Small ribosomal subunit protein uS17 (87 aa).

This sequence belongs to the universal ribosomal protein uS17 family. As to quaternary structure, part of the 30S ribosomal subunit.

One of the primary rRNA binding proteins, it binds specifically to the 5'-end of 16S ribosomal RNA. This Bacillus velezensis (strain DSM 23117 / BGSC 10A6 / LMG 26770 / FZB42) (Bacillus amyloliquefaciens subsp. plantarum) protein is Small ribosomal subunit protein uS17.